Here is a 505-residue protein sequence, read N- to C-terminus: Katanin p60 ATPase-containing subunit A-like 2 (505 aa).

The LisH domain maps to 25-57 (RRKNLLILIMHYLLQEGYVDSANSLEQETKISS). Disordered regions lie at residues 94–127 (LDHD…IGQQ) and 140–167 (RTNG…EASE). Composition is skewed to polar residues over residues 114–127 (GSNS…IGQQ) and 155–164 (QESGGNSPQE). Residue 298-305 (GPPGTGKT) coordinates ATP.

This sequence belongs to the AAA ATPase family. Katanin p60 subunit A1 subfamily. A-like 2 sub-subfamily.

The protein resides in the cytoplasm. It is found in the cytoskeleton. Its subcellular location is the spindle. It localises to the spindle pole. The enzyme catalyses n ATP + n H2O + a microtubule = n ADP + n phosphate + (n+1) alpha/beta tubulin heterodimers.. Its function is as follows. Severs microtubules in vitro in an ATP-dependent manner. This activity may promote rapid reorganization of cellular microtubule arrays. The sequence is that of Katanin p60 ATPase-containing subunit A-like 2 (katnal2) from Xenopus laevis (African clawed frog).